A 457-amino-acid polypeptide reads, in one-letter code: Cysteine--tRNA ligase (457 aa).

Zn(2+) is bound at residue Cys-30. Residues 32-42 (PTVYDRAHLGN) carry the 'HIGH' region motif. Zn(2+)-binding residues include Cys-213, His-238, and Glu-242. A 'KMSKS' region motif is present at residues 271 to 275 (KMSKS). ATP is bound at residue Lys-274.

The protein belongs to the class-I aminoacyl-tRNA synthetase family. As to quaternary structure, monomer. It depends on Zn(2+) as a cofactor.

It is found in the cytoplasm. The catalysed reaction is tRNA(Cys) + L-cysteine + ATP = L-cysteinyl-tRNA(Cys) + AMP + diphosphate. The sequence is that of Cysteine--tRNA ligase from Ruegeria sp. (strain TM1040) (Silicibacter sp.).